The chain runs to 84 residues: MIFFFIIKKLKTIKASFIKSFFIKDIDESLETEQINFYLKRIINLEGYYYGNYDLTTIKEKYYTLIINNAFIENEIVPDLIEKH.

This is an uncharacterized protein from Rickettsia prowazekii (strain Madrid E).